A 335-amino-acid polypeptide reads, in one-letter code: Phosphoserine phosphatase RsbU (335 aa).

Residues 123–333 (DIGAISVPAK…DDFTLIVLRR (211 aa)) form the PPM-type phosphatase domain.

It carries out the reaction O-phospho-L-serine + H2O = L-serine + phosphate. The catalysed reaction is O-phospho-D-serine + H2O = D-serine + phosphate. Stimulated by a long-lived interaction with RsbT. In terms of biological role, positive regulator of sigma-B activity. Dephosphorylates RsbV in response to environmental stress conveyed from the RsbXST module. In Bacillus subtilis (strain 168), this protein is Phosphoserine phosphatase RsbU (rsbU).